Reading from the N-terminus, the 236-residue chain is 15,16-dihydrobiliverdin:ferredoxin oxidoreductase (236 aa).

Belongs to the HY2 family.

It catalyses the reaction 15,16-dihydrobiliverdin + oxidized 2[4Fe-4S]-[ferredoxin] = biliverdin IXalpha + reduced 2[4Fe-4S]-[ferredoxin] + 2 H(+). Functionally, catalyzes the two-electron reduction of biliverdin IX-alpha at the C15 methine bridge. The polypeptide is 15,16-dihydrobiliverdin:ferredoxin oxidoreductase (Prochlorococcus marinus (strain MIT 9215)).